The following is a 415-amino-acid chain: MQSWSETAVPSVPGQGPPLRLFDTADRQVRPVTPGRTATMYVCGITPYDATHLGHAATYLTFDLVNRIWRDAGHDVHYVQNVTDVDDPLFERANRDGEDWVVLGMRETALFREDMEALRVLPPRDYIGAVESIGEVIEMVEKFVASGAAYVVDDPEFPDVYFRANATEQFGYESGYDRETMDKFFAERGGDPDRPGKEDPLDALVWRAVRPGEPSWPSPFGPGRPGWHIECSAIALNRIGSGFDVQGGGSDLIFPHHEYSAAHAESATGDRRFARHYVHTGMIGLDGEKMSKSRGNLVFVSKLRGEGVDPAAIRLGLLSGHYRQDRPWTEQLLADAHTRLQLWKDAAALESAPSATDTIARLRQHLADDLDTPKALDALDGWARRALDHGGSDTNAPSEFAAAVDALLGVRLRRP.

The interval Met1–Arg20 is disordered. Cys43 contributes to the Zn(2+) binding site. Residues Cys43 to Thr46, Thr58, and Asn81 to Thr83 each bind L-cysteinyl-5'-AMP. A 'HIGH' region motif is present at residues Ile45 to His55. The short motif at Glu187–Pro192 is the 'ERGGDP' region element. Trp227 is a binding site for L-cysteinyl-5'-AMP. Residue Cys231 coordinates Zn(2+). Gly249–Asp251 contacts L-cysteinyl-5'-AMP. His256 serves as a coordination point for Zn(2+). L-cysteinyl-5'-AMP is bound at residue Ile283. Positions Lys289–Ser293 match the 'KMSKS' region motif.

It belongs to the class-I aminoacyl-tRNA synthetase family. MshC subfamily. In terms of assembly, monomer. Requires Zn(2+) as cofactor.

It carries out the reaction 1D-myo-inositol 2-amino-2-deoxy-alpha-D-glucopyranoside + L-cysteine + ATP = 1D-myo-inositol 2-(L-cysteinylamino)-2-deoxy-alpha-D-glucopyranoside + AMP + diphosphate + H(+). Catalyzes the ATP-dependent condensation of GlcN-Ins and L-cysteine to form L-Cys-GlcN-Ins. The sequence is that of L-cysteine:1D-myo-inositol 2-amino-2-deoxy-alpha-D-glucopyranoside ligase from Rhodococcus jostii (strain RHA1).